We begin with the raw amino-acid sequence, 142 residues long: General odorant-binding protein 99a (142 aa).

Positions 1 to 16 (MKVFVAICVLIGLASA) are cleaved as a signal peptide. Cystine bridges form between cysteine 33–cysteine 64, cysteine 60–cysteine 116, and cysteine 105–cysteine 125.

It belongs to the PBP/GOBP family. In terms of tissue distribution, expressed in larval chemosensory organ. Specifically expressed exclusively in a subset of chemosensory sensilla on the third antennal segment.

The protein resides in the secreted. In terms of biological role, present in the aqueous fluid surrounding olfactory sensory dendrites and are thought to aid in the capture and transport of hydrophobic odorants into and through this fluid. This Drosophila melanogaster (Fruit fly) protein is General odorant-binding protein 99a (Obp99a).